Consider the following 86-residue polypeptide: MERNNRKVFTGRVVSDKMDKTIVVAVETKVRHKLYGKRVNYTKKYKAHDENNVAKVGDIVRIAETRPLSKDKRFRLVTVVEESVII.

This sequence belongs to the universal ribosomal protein uS17 family. In terms of assembly, part of the 30S ribosomal subunit.

In terms of biological role, one of the primary rRNA binding proteins, it binds specifically to the 5'-end of 16S ribosomal RNA. This Exiguobacterium sp. (strain ATCC BAA-1283 / AT1b) protein is Small ribosomal subunit protein uS17.